Here is a 217-residue protein sequence, read N- to C-terminus: Probable GTP-binding protein EngB (217 aa).

Residues 27-201 (EGIEVAFAGR…REKLDTWFSE (175 aa)) form the EngB-type G domain. Residues 35–42 (GRSNAGKS), 62–66 (GRTQL), 80–83 (DLPG), 147–150 (TKAD), and 180–182 (FSS) each bind GTP. Mg(2+) is bound by residues S42 and T64.

It belongs to the TRAFAC class TrmE-Era-EngA-EngB-Septin-like GTPase superfamily. EngB GTPase family. It depends on Mg(2+) as a cofactor.

Functionally, necessary for normal cell division and for the maintenance of normal septation. In Yersinia enterocolitica serotype O:8 / biotype 1B (strain NCTC 13174 / 8081), this protein is Probable GTP-binding protein EngB.